Consider the following 330-residue polypeptide: MKGALELQHRVSAHPDSRCWYVAWNPAGTTLATCGGDRAIRIWGKEGDSWECKCVLSDGHQRTVRKVAWSPCGKYLASASFDATTCIWKKTDEDFECLTVLEGHENEVKCVAWAPSGSLLATCSRDKSVWIWEVDEEDEYECLSVVNSHTQDVKHVVWHPTQELLASASYDNKICIYKEEDDDWECRATLEGHESTVWSLTFDPEGRRLASCSDDRTVKIWKESTTGDGSSDESWKCICTLSGFHGRTIYDIAWCRLTGALATACGDDGVRVFSEDPTADPEQPIFALSAHVPKAHNQDVNCVSWNPKEAGLLATCSDNGEFAIWKYNSA.

WD repeat units lie at residues 14–53, 59–98, 103–142, 148–187, 192–231, 244–283, and 295–330; these read HPDS…WECK, GHQR…FECL, GHEN…EYEC, SHTQ…WECR, GHES…DGSS, FHGR…DPEQ, and AHNQ…YNSA.

The protein belongs to the WD repeat CIA1 family. In terms of assembly, component of the CIA complex.

Its function is as follows. Key component of the cytosolic iron-sulfur protein assembly (CIA) complex, a multiprotein complex that mediates the incorporation of iron-sulfur cluster into extramitochondrial Fe/S proteins. This is Probable cytosolic iron-sulfur protein assembly protein ciao1 (ciao1) from Danio rerio (Zebrafish).